The sequence spans 214 residues: Cell division protein SepF (214 aa).

Residues 24–120 (DNYEEYEERK…NTRRAQESTA (97 aa)) form a disordered region. Over residues 30-40 (EERKAVNEPPR) the composition is skewed to basic and acidic residues. Positions 55–67 (ESYSQPAYTQQSE) are enriched in polar residues. Residues 69 to 98 (VVEKPSARYRSAEAHQERDTQQAAYTEKKV) show a composition bias toward basic and acidic residues. A compositionally biased stretch (polar residues) spans 101–120 (MRSSNQSATTNTRRAQESTA).

It belongs to the SepF family. As to quaternary structure, homodimer. Interacts with FtsZ.

Its subcellular location is the cytoplasm. Functionally, cell division protein that is part of the divisome complex and is recruited early to the Z-ring. Probably stimulates Z-ring formation, perhaps through the cross-linking of FtsZ protofilaments. Its function overlaps with FtsA. The protein is Cell division protein SepF of Enterococcus faecalis (strain ATCC 700802 / V583).